A 571-amino-acid chain; its full sequence is Proline--tRNA ligase (571 aa).

The protein belongs to the class-II aminoacyl-tRNA synthetase family. ProS type 1 subfamily. As to quaternary structure, homodimer.

It localises to the cytoplasm. The enzyme catalyses tRNA(Pro) + L-proline + ATP = L-prolyl-tRNA(Pro) + AMP + diphosphate. Functionally, catalyzes the attachment of proline to tRNA(Pro) in a two-step reaction: proline is first activated by ATP to form Pro-AMP and then transferred to the acceptor end of tRNA(Pro). As ProRS can inadvertently accommodate and process non-cognate amino acids such as alanine and cysteine, to avoid such errors it has two additional distinct editing activities against alanine. One activity is designated as 'pretransfer' editing and involves the tRNA(Pro)-independent hydrolysis of activated Ala-AMP. The other activity is designated 'posttransfer' editing and involves deacylation of mischarged Ala-tRNA(Pro). The misacylated Cys-tRNA(Pro) is not edited by ProRS. The chain is Proline--tRNA ligase from Vibrio vulnificus (strain YJ016).